Here is a 117-residue protein sequence, read N- to C-terminus: UPF0342 protein LGAS_1451 (117 aa).

It belongs to the UPF0342 family.

This chain is UPF0342 protein LGAS_1451, found in Lactobacillus gasseri (strain ATCC 33323 / DSM 20243 / BCRC 14619 / CIP 102991 / JCM 1131 / KCTC 3163 / NCIMB 11718 / NCTC 13722 / AM63).